The following is a 211-amino-acid chain: ATP phosphoribosyltransferase (211 aa).

Belongs to the ATP phosphoribosyltransferase family. Short subfamily. As to quaternary structure, heteromultimer composed of HisG and HisZ subunits.

Its subcellular location is the cytoplasm. It catalyses the reaction 1-(5-phospho-beta-D-ribosyl)-ATP + diphosphate = 5-phospho-alpha-D-ribose 1-diphosphate + ATP. The protein operates within amino-acid biosynthesis; L-histidine biosynthesis; L-histidine from 5-phospho-alpha-D-ribose 1-diphosphate: step 1/9. Functionally, catalyzes the condensation of ATP and 5-phosphoribose 1-diphosphate to form N'-(5'-phosphoribosyl)-ATP (PR-ATP). Has a crucial role in the pathway because the rate of histidine biosynthesis seems to be controlled primarily by regulation of HisG enzymatic activity. This is ATP phosphoribosyltransferase from Thermosynechococcus vestitus (strain NIES-2133 / IAM M-273 / BP-1).